The sequence spans 341 residues: Ectoine-binding periplasmic protein TeaA (341 aa).

The first 25 residues, Met1–Ser25, serve as a signal peptide directing secretion. Residues Glu34, Arg169, Asn209, Trp213, and Phe234 each coordinate L-ectoine.

It belongs to the bacterial solute-binding protein 7 family. In terms of assembly, monomer. The complex comprises the extracytoplasmic solute receptor protein TeaA, and the two transmembrane proteins TeaB and TeaC.

The protein resides in the periplasm. Part of the tripartite ATP-independent periplasmic (TRAP) transport system TeaABC involved in the uptake of ectoine and hydroxyectoine in response to osmotic upshock. Probably functions as a recovery system for synthesized ectoine that leaks out of the cell. Binds ectoine with high affinity. Affinity for hydroxyectoine is approximately 20-fold lower. This chain is Ectoine-binding periplasmic protein TeaA (teaA), found in Halomonas elongata (strain ATCC 33173 / DSM 2581 / NBRC 15536 / NCIMB 2198 / 1H9).